The chain runs to 271 residues: Phosphate import ATP-binding protein PstB 3 (271 aa).

In terms of domain architecture, ABC transporter spans 20 to 266 (LRVEGLGFYY…PQETQTRDYV (247 aa)). 52–59 (GPSGCGKS) lines the ATP pocket.

It belongs to the ABC transporter superfamily. Phosphate importer (TC 3.A.1.7) family. The complex is composed of two ATP-binding proteins (PstB), two transmembrane proteins (PstC and PstA) and a solute-binding protein (PstS).

It localises to the cell inner membrane. The enzyme catalyses phosphate(out) + ATP + H2O = ADP + 2 phosphate(in) + H(+). Its function is as follows. Part of the ABC transporter complex PstSACB involved in phosphate import. Responsible for energy coupling to the transport system. This Synechocystis sp. (strain ATCC 27184 / PCC 6803 / Kazusa) protein is Phosphate import ATP-binding protein PstB 3.